A 254-amino-acid polypeptide reads, in one-letter code: Acetylglutamate kinase (254 aa).

Substrate contacts are provided by residues 40 to 41 (GG), Arg62, and Asn158.

The protein belongs to the acetylglutamate kinase family. ArgB subfamily.

It localises to the cytoplasm. It catalyses the reaction N-acetyl-L-glutamate + ATP = N-acetyl-L-glutamyl 5-phosphate + ADP. It functions in the pathway amino-acid biosynthesis; L-arginine biosynthesis; N(2)-acetyl-L-ornithine from L-glutamate: step 2/4. In terms of biological role, catalyzes the ATP-dependent phosphorylation of N-acetyl-L-glutamate. The chain is Acetylglutamate kinase from Chloroflexus aggregans (strain MD-66 / DSM 9485).